A 3059-amino-acid chain; its full sequence is Genome polyprotein (3059 aa).

In terms of domain architecture, Peptidase S30 spans 154–298; the sequence is GVTPYSVQQL…ESTMLSTHHY (145 aa). Active-site for P1 proteinase activity residues include His207, Asp216, and Ser249. Residues 349–352 carry the Involved in interaction with stylet and aphid transmission motif; that stretch reads KITC. An Involved in virions binding and aphid transmission motif is present at residues 607–609; sequence PTK. The Peptidase C6 domain occupies 633–755; it reads MYIAKSGYCY…DSEMKHYRVG (123 aa). Catalysis depends on for helper component proteinase activity residues Cys641 and His714. The Helicase ATP-binding domain maps to 1226–1378; it reads QIAHDLHTDI…TQYPVEIRVE (153 aa). Position 1239–1246 (1239–1246) interacts with ATP; that stretch reads GAVGSGKS. The DEFH box signature appears at 1328-1331; it reads DEFH. One can recognise a Helicase C-terminal domain in the interval 1397 to 1556; the sequence is DLTSKCDNLL…GLPISTQSVT (160 aa). The Nuclear localization signal signature appears at 1883 to 1890; that stretch reads KKGKTKGK. An O-(5'-phospho-RNA)-tyrosine modification is found at Tyr1905. In terms of domain architecture, Peptidase C4 spans 2032-2250; it reads STSMFRGVRD…VCWGSFHLQD (219 aa). Residues His2077, Asp2112, and Cys2182 each act as for nuclear inclusion protein A activity in the active site. In terms of domain architecture, RdRp catalytic spans 2516–2640; that stretch reads WVYCDADGSQ…AIRPDMEHKL (125 aa). The residue at position 3042 (Thr3042) is a Phosphothreonine.

Belongs to the potyviridae genome polyprotein family. In terms of assembly, interacts with host eIF4E protein (via cap-binding region); this interaction mediates the translation of the VPg-viral RNA conjugates. Part of a complex that comprises VPg, RNA, host EIF4E and EIF4G; this interaction mediates the translation of the VPg-viral RNA conjugates. In terms of processing, VPg is uridylylated by the polymerase and is covalently attached to the 5'-end of the genomic RNA. This uridylylated form acts as a nucleotide-peptide primer for the polymerase. Phosphorylation inhibits the RNA-binding capacity of the capsid protein. Post-translationally, potyviral RNA is expressed as two polyproteins which undergo post-translational proteolytic processing. Genome polyprotein is processed by NIa-pro, P1 and HC-pro proteinases resulting in the production of at least ten individual proteins. P3N-PIPO polyprotein is cleaved by P1 and HC-pro proteinases resulting in the production of three individual proteins. The P1 proteinase and the HC-pro cleave only their respective C-termini autocatalytically. 6K1 is essential for proper proteolytic separation of P3 from CI.

The protein localises to the host cytoplasmic vesicle. It is found in the host nucleus. Its subcellular location is the virion. It catalyses the reaction RNA(n) + a ribonucleoside 5'-triphosphate = RNA(n+1) + diphosphate. The catalysed reaction is Hydrolyzes glutaminyl bonds, and activity is further restricted by preferences for the amino acids in P6 - P1' that vary with the species of potyvirus, e.g. Glu-Xaa-Xaa-Tyr-Xaa-Gln-|-(Ser or Gly) for the enzyme from tobacco etch virus. The natural substrate is the viral polyprotein, but other proteins and oligopeptides containing the appropriate consensus sequence are also cleaved.. It carries out the reaction Hydrolyzes a Gly-|-Gly bond at its own C-terminus, commonly in the sequence -Tyr-Xaa-Val-Gly-|-Gly, in the processing of the potyviral polyprotein.. Required for aphid transmission and also has proteolytic activity. Only cleaves a Gly-Gly dipeptide at its own C-terminus. Interacts with virions and aphid stylets. Acts as a suppressor of RNA-mediated gene silencing, also known as post-transcriptional gene silencing (PTGS), a mechanism of plant viral defense that limits the accumulation of viral RNAs. May have RNA-binding activity. Its function is as follows. Has helicase activity. It may be involved in replication. Functionally, indispensable for virus replication. Reduces the abundance of host transcripts related to jasmonic acid biosynthesis therefore altering the host defenses. In order to increase its own stability, decreases host protein degradation pathways. In terms of biological role, indispensable for virus replication. Mediates the cap-independent, EIF4E-dependent translation of viral genomic RNAs. Binds to the cap-binding site of host EIF4E and thus interferes with the host EIF4E-dependent mRNA export and translation. VPg-RNA directly binds EIF4E and is a template for transcription. Also forms trimeric complexes with EIF4E-EIF4G, which are templates for translation. Its function is as follows. Has RNA-binding and proteolytic activities. Functionally, an RNA-dependent RNA polymerase that plays an essential role in the virus replication. In terms of biological role, involved in aphid transmission, cell-to-cell and systemis movement, encapsidation of the viral RNA and in the regulation of viral RNA amplification. The chain is Genome polyprotein from Potato virus A (PVA).